The chain runs to 75 residues: Large ribosomal subunit protein bL31 (75 aa).

This sequence belongs to the bacterial ribosomal protein bL31 family. Type A subfamily. As to quaternary structure, part of the 50S ribosomal subunit.

Its function is as follows. Binds the 23S rRNA. The sequence is that of Large ribosomal subunit protein bL31 from Chlorobaculum tepidum (strain ATCC 49652 / DSM 12025 / NBRC 103806 / TLS) (Chlorobium tepidum).